Here is a 339-residue protein sequence, read N- to C-terminus: uncharacterized protein (339 aa).

ATP is bound at residue 28–35 (GPINSGKT).

This sequence belongs to the archaeal ATPase family.

This is an uncharacterized protein from Pyrococcus abyssi (strain GE5 / Orsay).